Here is a 138-residue protein sequence, read N- to C-terminus: Putative nickel-responsive regulator (138 aa).

Residues histidine 76, histidine 87, histidine 89, and cysteine 95 each coordinate Ni(2+).

The protein belongs to the transcriptional regulatory CopG/NikR family. Ni(2+) serves as cofactor.

In terms of biological role, transcriptional regulator. This chain is Putative nickel-responsive regulator, found in Pseudomonas putida (strain W619).